Here is a 297-residue protein sequence, read N- to C-terminus: MEARIILLRIQIPWSANRQFSHPPLDFPRFIRASSSSTSQKPKTYEGPKPRKNLVADFISKNDDLVRSLPIYVGGASLLAVLFNRTVSGIAPVADASSSQSRADLLALGLAVTNLLTGLVWLSIRPKSITPVNPKGVECKVVESDLPASMVSELLWAWESLKVATCCKSLVIVYNGICLIQIGMVAESPEDKKTVIVKTDKLMQGSVYRGVMKSKAQSYLANLSLYPGRSELPFLPANTQAVILQPLGDKGIAVIGGNTIRGFTSSDQAWISSIGEKLDATLGRYFVDSDEISRVTV.

The N-terminal 33 residues, 1 to 33 (MEARIILLRIQIPWSANRQFSHPPLDFPRFIRA), are a transit peptide targeting the chloroplast. Over 34–70 (SSSSTSQKPKTYEGPKPRKNLVADFISKNDDLVRSLP) the chain is Stromal. A helical transmembrane segment spans residues 71–91 (IYVGGASLLAVLFNRTVSGIA). The Lumenal segment spans residues 92 to 103 (PVADASSSQSRA). The chain crosses the membrane as a helical span at residues 104–124 (DLLALGLAVTNLLTGLVWLSI). Over 125-297 (RPKSITPVNP…DSDEISRVTV (173 aa)) the chain is Stromal.

Its subcellular location is the plastid. It localises to the chloroplast thylakoid membrane. Functionally, required for the biogenesis and accumulation of native cytochrome b6 in the thylakoid membrane. Controls the conversion of apocytochrome b6 to holocytochrome b6. Required for covalent binding of the c-type heme to cytochrome b6. This is Protein COFACTOR ASSEMBLY OF COMPLEX C SUBUNIT B CCB4, chloroplastic from Arabidopsis thaliana (Mouse-ear cress).